Consider the following 224-residue polypeptide: Lipoprotein-releasing system ATP-binding protein LolD (224 aa).

The region spanning 6–224 is the ABC transporter domain; sequence LEFCNVSKFF…IVNHSLISSI (219 aa). 43–50 serves as a coordination point for ATP; that stretch reads GASGVGKT.

The protein belongs to the ABC transporter superfamily. Lipoprotein translocase (TC 3.A.1.125) family. In terms of assembly, the complex is composed of two ATP-binding proteins (LolD) and two transmembrane proteins (LolC and LolE).

Its subcellular location is the cell inner membrane. Its function is as follows. Part of the ABC transporter complex LolCDE involved in the translocation of mature outer membrane-directed lipoproteins, from the inner membrane to the periplasmic chaperone, LolA. Responsible for the formation of the LolA-lipoprotein complex in an ATP-dependent manner. The polypeptide is Lipoprotein-releasing system ATP-binding protein LolD (Neorickettsia sennetsu (strain ATCC VR-367 / Miyayama) (Ehrlichia sennetsu)).